The chain runs to 123 residues: uncharacterized protein (123 aa).

Transmembrane regions (helical) follow at residues Val-7–Val-29, Phe-44–Ile-66, and Leu-79–Ala-101.

It is found in the cell membrane. This is an uncharacterized protein from Bacillus subtilis (strain 168).